The chain runs to 385 residues: MYLMNTYSRFPATFVYGKGSWIYDEKGNAYLDFTSGIAVNVLGHSHPRLVEAIKDQAEKLIHCSNLFWNRPQMELAELLSKNTFGGKVFFANTGTEANEAAIKIARKYGKKKSEKKYRILSAHNSFHGRTLGSLTATGQPKYQKPFEPLVPGFEYFEFNNVEDLRRKMSEDVCAVFLEPIQGESGIVPATKEFLEEARKLCDEYDALLVFDEVQCGMGRTGKLFAYQKYGVVPDVLTTAKGLGGGVPIGAVIVNERANVLEPGDHGTTFGGNPLACRAGVTVIKELTKEGFLEEVEEKGNYLMKKLQEMKEEYDVVADVRGMGLMIGIQFREEVSNREVATKCFENKLLVVPAGNNTIRFLPPLTVEYGEIDLAVETLKKVLQGI.

Pyridoxal 5'-phosphate-binding positions include G94–T95 and F126. R129 is a binding site for N(2)-acetyl-L-ornithine. D211–Q214 serves as a coordination point for pyridoxal 5'-phosphate. Residue K240 is modified to N6-(pyridoxal phosphate)lysine. T267 contacts N(2)-acetyl-L-ornithine. T268 contributes to the pyridoxal 5'-phosphate binding site.

The protein belongs to the class-III pyridoxal-phosphate-dependent aminotransferase family. ArgD subfamily. As to quaternary structure, homodimer. It depends on pyridoxal 5'-phosphate as a cofactor.

It is found in the cytoplasm. It catalyses the reaction N(2)-acetyl-L-ornithine + 2-oxoglutarate = N-acetyl-L-glutamate 5-semialdehyde + L-glutamate. The protein operates within amino-acid biosynthesis; L-arginine biosynthesis; N(2)-acetyl-L-ornithine from L-glutamate: step 4/4. In Thermotoga maritima (strain ATCC 43589 / DSM 3109 / JCM 10099 / NBRC 100826 / MSB8), this protein is Acetylornithine aminotransferase.